Here is a 504-residue protein sequence, read N- to C-terminus: Glutamate--tRNA ligase (504 aa).

The 'HIGH' region signature appears at 27–37 (PSPTGTPHVGL). Residues 271–275 (KLSKR) carry the 'KMSKS' region motif. K274 is a binding site for ATP.

This sequence belongs to the class-I aminoacyl-tRNA synthetase family. Glutamate--tRNA ligase type 1 subfamily. As to quaternary structure, monomer.

It is found in the cytoplasm. It carries out the reaction tRNA(Glu) + L-glutamate + ATP = L-glutamyl-tRNA(Glu) + AMP + diphosphate. Its function is as follows. Catalyzes the attachment of glutamate to tRNA(Glu) in a two-step reaction: glutamate is first activated by ATP to form Glu-AMP and then transferred to the acceptor end of tRNA(Glu). In Arthrobacter sp. (strain FB24), this protein is Glutamate--tRNA ligase.